The chain runs to 1116 residues: Large proline-rich protein bag6-B (1116 aa).

Residues 7-82 (MDVTVKTLDS…HLVERAPPQT (76 aa)) form the Ubiquitin-like domain. Disordered regions lie at residues 76–114 (ERAP…RNGN), 170–221 (EGQP…PSEY), 329–385 (STTG…HPHP), 473–502 (PAAP…APGA), 533–589 (GGSS…GTDQ), 640–678 (VPVS…ESLP), and 1058–1080 (TGAK…EAQG). The span at 79-100 (PPQTQTSTSGPSTSSSTSPSSS) shows a compositional bias: low complexity. A compositionally biased stretch (polar residues) spans 194-207 (RETLPQTTQNADGQ). Low complexity predominate over residues 208–219 (SNSTPTSHPSPS). Residues 344–353 (GNATPSTNTS) are compositionally biased toward polar residues. Composition is skewed to low complexity over residues 482–502 (PGAA…APGA), 535–580 (SSTS…SVPS), and 641–652 (PVSTSPPQSASQ). The segment covering 653 to 672 (APPPPSSPAPPAHSAPPPAA) has biased composition (pro residues). The span at 1068–1080 (CVKRELDNSEAQG) shows a compositional bias: basic and acidic residues.

In terms of assembly, component of the bag6/bat3 complex.

The protein localises to the cytoplasm. It localises to the cytosol. The protein resides in the nucleus. Its subcellular location is the secreted. It is found in the extracellular exosome. ATP-independent molecular chaperone preventing the aggregation of misfolded and hydrophobic patches-containing proteins. Functions as part of a cytosolic protein quality control complex, the bag6/bat3 complex, which maintains these client proteins in a soluble state and participates in their proper delivery to the endoplasmic reticulum or alternatively can promote their sorting to the proteasome where they undergo degradation. The bag6/bat3 complex is involved in the post-translational delivery of tail-anchored/type II transmembrane proteins to the endoplasmic reticulum membrane. Similarly, the bag6/bat3 complex also functions as a sorting platform for proteins of the secretory pathway that are mislocalized to the cytosol either delivering them to the proteasome for degradation or to the endoplasmic reticulum. The bag6/bat3 complex also plays a role in the endoplasmic reticulum-associated degradation (ERAD), a quality control mechanism that eliminates unwanted proteins of the endoplasmic reticulum through their retrotranslocation to the cytosol and their targeting to the proteasome. It maintains these retrotranslocated proteins in an unfolded yet soluble state condition in the cytosol to ensure their proper delivery to the proteasome. Also required for selective ubiquitin-mediated degradation of defective nascent chain polypeptides by the proteasome. Also involved in endoplasmic reticulum stress-induced pre-emptive quality control, a mechanism that selectively attenuates the translocation of newly synthesized proteins into the endoplasmic reticulum and reroutes them to the cytosol for proteasomal degradation. May ensure the proper degradation of these proteins and thereby protects the endoplasmic reticulum from protein overload upon stress. By stabilizing a large spectrum of proteins, may indirectly affect different biological processes including apoptosis. By controlling the steady-state expression of the IGF1R receptor, indirectly regulates the insulin-like growth factor receptor signaling pathway. In terms of biological role, when nuclear, may also act as a component of some chromatin regulator complex. The sequence is that of Large proline-rich protein bag6-B from Xenopus laevis (African clawed frog).